The chain runs to 204 residues: Urease accessory protein UreG (204 aa).

GTP is bound at residue 11 to 18 (GPVGAGKT).

It belongs to the SIMIBI class G3E GTPase family. UreG subfamily. As to quaternary structure, homodimer. UreD, UreF and UreG form a complex that acts as a GTP-hydrolysis-dependent molecular chaperone, activating the urease apoprotein by helping to assemble the nickel containing metallocenter of UreC. The UreE protein probably delivers the nickel.

It localises to the cytoplasm. Its function is as follows. Facilitates the functional incorporation of the urease nickel metallocenter. This process requires GTP hydrolysis, probably effectuated by UreG. This is Urease accessory protein UreG from Staphylococcus aureus (strain bovine RF122 / ET3-1).